A 68-amino-acid polypeptide reads, in one-letter code: ATP synthase protein 8 (68 aa).

A helical membrane pass occupies residues 8–24; the sequence is VWPTIIMSMLLALFLLM. Lysine 54 bears the N6-acetyllysine; alternate mark. Lysine 54 bears the N6-succinyllysine; alternate mark. Lysine 57 is modified (N6-acetyllysine).

This sequence belongs to the ATPase protein 8 family. F-type ATPases have 2 components, CF(1) - the catalytic core - and CF(0) - the membrane proton channel. Component of an ATP synthase complex composed of ATP5PB, ATP5MC1, ATP5F1E, ATP5PD, ATP5ME, ATP5PF, ATP5MF, MT-ATP6, MT-ATP8, ATP5F1A, ATP5F1B, ATP5F1D, ATP5F1C, ATP5PO, ATP5MG, ATP5MK and ATP5MJ. Interacts with PRICKLE3.

It is found in the mitochondrion membrane. In terms of biological role, mitochondrial membrane ATP synthase (F(1)F(0) ATP synthase or Complex V) produces ATP from ADP in the presence of a proton gradient across the membrane which is generated by electron transport complexes of the respiratory chain. F-type ATPases consist of two structural domains, F(1) - containing the extramembraneous catalytic core and F(0) - containing the membrane proton channel, linked together by a central stalk and a peripheral stalk. During catalysis, ATP synthesis in the catalytic domain of F(1) is coupled via a rotary mechanism of the central stalk subunits to proton translocation. Part of the complex F(0) domain. Minor subunit located with subunit a in the membrane. This Hylobates lar (Lar gibbon) protein is ATP synthase protein 8 (MT-ATP8).